Reading from the N-terminus, the 505-residue chain is Cyclin-dependent kinase C-1 (505 aa).

The Protein kinase domain occupies 26–325; it reads FEKLEQIGEG…AKDALDAEYF (300 aa). Residues 32–40 and lysine 55 each bind ATP; that span reads IGEGTYGQV. Tyrosine 37 carries the post-translational modification Phosphotyrosine. Residue aspartate 164 is the Proton acceptor of the active site. The residue at position 198 (threonine 198) is a Phosphothreonine. Positions 336–505 are disordered; sequence SLPTYESSHE…QRNQQYGWQQ (170 aa). Residues 429 to 456 are compositionally biased toward low complexity; the sequence is PPSGNQSGGYNQSRGGYSSGSYPPQGRG. Positions 482-491 are enriched in gly residues; that stretch reads GQYGGSGSSG. Over residues 492-505 the composition is skewed to low complexity; it reads RGQNQRNQQYGWQQ.

This sequence belongs to the protein kinase superfamily. CMGC Ser/Thr protein kinase family. CDC2/CDKX subfamily. As to quaternary structure, interacts with CYCT1-3. As to expression, highly expressed in flowers. Expressed in seedlings, roots, rosettes and stems.

It carries out the reaction L-seryl-[protein] + ATP = O-phospho-L-seryl-[protein] + ADP + H(+). The enzyme catalyses L-threonyl-[protein] + ATP = O-phospho-L-threonyl-[protein] + ADP + H(+). It catalyses the reaction [DNA-directed RNA polymerase] + ATP = phospho-[DNA-directed RNA polymerase] + ADP + H(+). This is Cyclin-dependent kinase C-1 (CDKC-1) from Arabidopsis thaliana (Mouse-ear cress).